A 680-amino-acid chain; its full sequence is 1-deoxy-D-xylulose-5-phosphate synthase (680 aa).

Thiamine diphosphate-binding positions include His-113 and Gly-154–Ser-156. Asp-185 serves as a coordination point for Mg(2+). Thiamine diphosphate is bound by residues Gly-186–Ala-187, Asn-214, Phe-323, and Glu-408. Asn-214 serves as a coordination point for Mg(2+).

The protein belongs to the transketolase family. DXPS subfamily. As to quaternary structure, homodimer. Mg(2+) serves as cofactor. Requires thiamine diphosphate as cofactor.

The catalysed reaction is D-glyceraldehyde 3-phosphate + pyruvate + H(+) = 1-deoxy-D-xylulose 5-phosphate + CO2. Its pathway is metabolic intermediate biosynthesis; 1-deoxy-D-xylulose 5-phosphate biosynthesis; 1-deoxy-D-xylulose 5-phosphate from D-glyceraldehyde 3-phosphate and pyruvate: step 1/1. Functionally, catalyzes the acyloin condensation reaction between C atoms 2 and 3 of pyruvate and glyceraldehyde 3-phosphate to yield 1-deoxy-D-xylulose-5-phosphate (DXP). The polypeptide is 1-deoxy-D-xylulose-5-phosphate synthase (Psychrobacter arcticus (strain DSM 17307 / VKM B-2377 / 273-4)).